A 351-amino-acid polypeptide reads, in one-letter code: Probable aldo-keto reductase 2 (351 aa).

Tyr67 acts as the Proton donor in catalysis. A substrate-binding site is contributed by His134. Residue 213–223 (SPLGRGFFSAG) participates in NADP(+) binding. The tract at residues 317–351 (YASTDDVRGDRYPQAMANTTWQNSETPPLSSWKAQ) is disordered. Residues 332 to 351 (MANTTWQNSETPPLSSWKAQ) show a composition bias toward polar residues.

This sequence belongs to the aldo/keto reductase family.

The polypeptide is Probable aldo-keto reductase 2 (Oryza sativa subsp. indica (Rice)).